The following is a 476-amino-acid chain: Lactate utilization protein B (476 aa).

2 4Fe-4S ferredoxin-type domains span residues 304–334 (GGEF…GHTY) and 353–382 (YDDF…LHQL). Residues cysteine 313, cysteine 316, cysteine 319, cysteine 323, cysteine 366, cysteine 369, and cysteine 373 each contribute to the [4Fe-4S] cluster site. The segment at 452 to 476 (RDFPAPNKNSFRNWMKHRTKGDEES) is disordered.

The protein belongs to the LutB/YkgF family.

Its function is as follows. Is involved in L-lactate degradation and allows cells to grow with lactate as the sole carbon source. Has probably a role as an electron transporter during oxidation of L-lactate. This chain is Lactate utilization protein B, found in Lysinibacillus sphaericus (strain C3-41).